Here is a 279-residue protein sequence, read N- to C-terminus: Movement protein (279 aa).

Residues E247–L279 form a disordered region. Positions E254–S268 are enriched in low complexity.

Belongs to the cucumovirus movement protein family.

Its subcellular location is the host cell junction. It is found in the host plasmodesma. Functionally, transports viral genome to neighboring plant cells directly through plasmosdesmata, without any budding. The movement protein allows efficient cell to cell propagation, by bypassing the host cell wall barrier. Acts by forming a tubular structure at the host plasmodesmata, enlarging it enough to allow free passage of virion capsids. The protein is Movement protein of Cucumis sativus (Cucumber).